The following is a 351-amino-acid chain: MAKIAVFFGGSSTEHSISIRTGCFICRTLHTMGHSVKPILLTQDGGWVVPLQYRISIPYEAVNSSDLFEEEFQKTNGVSKMDFISNLDADIVFLGLHGGKGEDGSIQGFLRVLGVPYTGSGVAASALAMDKTRANQIFLQSGQKVAPFFEVEKLGYTNSPEETVIKLMSLGFPQFLKPVEGGSSVSTYKITNQEQLSRQLALIFESDSKVMSQSFLAGTEVSCGVLERYRNGKLERIALPATEIVPGGEFFDFESKYKQGGSREITPARISKQEMTRVQELAIDAHTSLGCRGYSRSDFIIVGGEPHILETNTLPGMTETSLIPQQAKAAGITMEEVFADLIEIGLKHSIH.

The region spanning 135–343 (NQIFLQSGQK…MEEVFADLIE (209 aa)) is the ATP-grasp domain. 167–222 (LMSLGFPQFLKPVEGGSSVSTYKITNQEQLSRQLALIFESDSKVMSQSFLAGTEVS) contributes to the ATP binding site. Positions 298, 310, and 312 each coordinate Mg(2+).

It belongs to the D-alanine--D-alanine ligase family. Mg(2+) is required as a cofactor. Requires Mn(2+) as cofactor.

Its subcellular location is the cytoplasm. It catalyses the reaction 2 D-alanine + ATP = D-alanyl-D-alanine + ADP + phosphate + H(+). It functions in the pathway cell wall biogenesis; peptidoglycan biosynthesis. Its function is as follows. Cell wall formation. The chain is D-alanine--D-alanine ligase from Leptospira borgpetersenii serovar Hardjo-bovis (strain JB197).